Reading from the N-terminus, the 459-residue chain is Sperm-tail PG-rich repeat-containing protein 2 (459 aa).

9 STPGR repeats span residues 21–30, 63–73, 119–148, 157–203, 213–243, 257–268, 351–377, 400–410, and 433–443; these read VGPGSYQVPF, PGPGHYNVSEA, TLGPAYYKPQFDVSNATLKYKGIHFGNSSG, GPGP…QEKK, TPAPGTYNEPRTALKSLKKTSGLKNIPFGQS, PGPGFYNVLNNT, PAPGSYDVHKSYEMSQVKHKYMPPRSL, GPGPAAYNPVL, and TPGPATYEISQ.

This is Sperm-tail PG-rich repeat-containing protein 2 (STPG2) from Homo sapiens (Human).